Consider the following 154-residue polypeptide: MAPVPHRSRHKKGRSGSVRPAHPTVPTWIQYTPEEVEQLAVELARRGFQPSQIGIVLRDQYGIPLVKSITGKKLVKVLEEHGIKYEIPEDLLNLIRRALRIRKHLEEHPKDMSSRRGLQLVESKIHRLIKYYKRVGRLPRDFVYNPQALSHLAT.

Residues 1-14 (MAPVPHRSRHKKGR) show a composition bias toward basic residues. The interval 1–24 (MAPVPHRSRHKKGRSGSVRPAHPT) is disordered.

The protein belongs to the universal ribosomal protein uS15 family. Part of the 30S ribosomal subunit.

In Pyrobaculum arsenaticum (strain DSM 13514 / JCM 11321 / PZ6), this protein is Small ribosomal subunit protein uS15.